The chain runs to 224 residues: 3-dehydroquinate dehydratase (224 aa).

3-dehydroquinate contacts are provided by residues 35–37 and Arg65; that span reads EFR. The active-site Proton donor/acceptor is His120. The active-site Schiff-base intermediate with substrate is Lys146. 3 residues coordinate 3-dehydroquinate: Arg183, Thr202, and Gln206.

Belongs to the type-I 3-dehydroquinase family. As to quaternary structure, homodimer.

The enzyme catalyses 3-dehydroquinate = 3-dehydroshikimate + H2O. It participates in metabolic intermediate biosynthesis; chorismate biosynthesis; chorismate from D-erythrose 4-phosphate and phosphoenolpyruvate: step 3/7. In terms of biological role, involved in the third step of the chorismate pathway, which leads to the biosynthesis of aromatic amino acids. Catalyzes the cis-dehydration of 3-dehydroquinate (DHQ) and introduces the first double bond of the aromatic ring to yield 3-dehydroshikimate. The chain is 3-dehydroquinate dehydratase from Methanobrevibacter smithii (strain ATCC 35061 / DSM 861 / OCM 144 / PS).